The chain runs to 131 residues: Fumarate reductase subunit C (131 aa).

The next 3 helical transmembrane spans lie at 30-50 (EGTA…LFAL), 57-77 (WMGF…LITL), and 109-129 (IIKG…YVAL).

It belongs to the FrdC family. Part of an enzyme complex containing four subunits: a flavoprotein (FrdA), an iron-sulfur protein (FrdB), and two hydrophobic anchor proteins (FrdC and FrdD).

It is found in the cell inner membrane. Two distinct, membrane-bound, FAD-containing enzymes are responsible for the catalysis of fumarate and succinate interconversion; fumarate reductase is used in anaerobic growth, and succinate dehydrogenase is used in aerobic growth. Anchors the catalytic components of the fumarate reductase complex to the cell inner membrane, binds quinones. This is Fumarate reductase subunit C from Salmonella heidelberg (strain SL476).